A 599-amino-acid polypeptide reads, in one-letter code: Aspartate--tRNA(Asp/Asn) ligase (599 aa).

Glu174 is an L-aspartate binding site. Residues Gln198–Lys201 form an aspartate region. Arg220 contacts L-aspartate. ATP contacts are provided by residues Arg220–Glu222 and Gln229. His457 contributes to the L-aspartate binding site. Glu491 lines the ATP pocket. Arg498 provides a ligand contact to L-aspartate. Residue Gly543–Arg546 participates in ATP binding.

This sequence belongs to the class-II aminoacyl-tRNA synthetase family. Type 1 subfamily. In terms of assembly, homodimer.

It localises to the cytoplasm. It catalyses the reaction tRNA(Asx) + L-aspartate + ATP = L-aspartyl-tRNA(Asx) + AMP + diphosphate. Aspartyl-tRNA synthetase with relaxed tRNA specificity since it is able to aspartylate not only its cognate tRNA(Asp) but also tRNA(Asn). Reaction proceeds in two steps: L-aspartate is first activated by ATP to form Asp-AMP and then transferred to the acceptor end of tRNA(Asp/Asn). The protein is Aspartate--tRNA(Asp/Asn) ligase of Paraburkholderia phymatum (strain DSM 17167 / CIP 108236 / LMG 21445 / STM815) (Burkholderia phymatum).